The primary structure comprises 352 residues: A-type ATP synthase subunit C (352 aa).

Belongs to the V-ATPase V0D/AC39 subunit family. As to quaternary structure, has multiple subunits with at least A(3), B(3), C, D, E, F, H, I and proteolipid K(x).

It is found in the cell membrane. Functionally, component of the A-type ATP synthase that produces ATP from ADP in the presence of a proton gradient across the membrane. The polypeptide is A-type ATP synthase subunit C (Halobacterium salinarum (strain ATCC 29341 / DSM 671 / R1)).